The primary structure comprises 295 residues: tRNA-cytidine(32) 2-sulfurtransferase (295 aa).

The PP-loop motif motif lies at 63 to 68; it reads SGGKDS. Positions 138, 141, and 229 each coordinate [4Fe-4S] cluster.

Belongs to the TtcA family. In terms of assembly, homodimer. Mg(2+) is required as a cofactor. It depends on [4Fe-4S] cluster as a cofactor.

Its subcellular location is the cytoplasm. It catalyses the reaction cytidine(32) in tRNA + S-sulfanyl-L-cysteinyl-[cysteine desulfurase] + AH2 + ATP = 2-thiocytidine(32) in tRNA + L-cysteinyl-[cysteine desulfurase] + A + AMP + diphosphate + H(+). It functions in the pathway tRNA modification. Functionally, catalyzes the ATP-dependent 2-thiolation of cytidine in position 32 of tRNA, to form 2-thiocytidine (s(2)C32). The sulfur atoms are provided by the cysteine/cysteine desulfurase (IscS) system. The sequence is that of tRNA-cytidine(32) 2-sulfurtransferase from Hyphomonas neptunium (strain ATCC 15444).